We begin with the raw amino-acid sequence, 112 residues long: Putative transposase YkgN (112 aa).

It belongs to the transposase 8 family.

In Escherichia coli (strain K12), this protein is Putative transposase YkgN (ykgN).